The following is a 78-amino-acid chain: Putative membrane protein insertion efficiency factor (78 aa).

It belongs to the UPF0161 family.

It is found in the cell inner membrane. In terms of biological role, could be involved in insertion of integral membrane proteins into the membrane. The chain is Putative membrane protein insertion efficiency factor from Prochlorococcus marinus subsp. pastoris (strain CCMP1986 / NIES-2087 / MED4).